We begin with the raw amino-acid sequence, 378 residues long: tRNA-specific 2-thiouridylase MnmA (378 aa).

Residues 14–21 (AMSGGVDS) and L40 contribute to the ATP site. The Nucleophile role is filled by C109. The cysteines at positions 109 and 208 are disulfide-linked. G133 contacts ATP. The segment at 156 to 158 (KDQ) is interaction with tRNA. The Cysteine persulfide intermediate role is filled by C208.

This sequence belongs to the MnmA/TRMU family.

It localises to the cytoplasm. The enzyme catalyses S-sulfanyl-L-cysteinyl-[protein] + uridine(34) in tRNA + AH2 + ATP = 2-thiouridine(34) in tRNA + L-cysteinyl-[protein] + A + AMP + diphosphate + H(+). Functionally, catalyzes the 2-thiolation of uridine at the wobble position (U34) of tRNA, leading to the formation of s(2)U34. This chain is tRNA-specific 2-thiouridylase MnmA, found in Streptomyces griseus subsp. griseus (strain JCM 4626 / CBS 651.72 / NBRC 13350 / KCC S-0626 / ISP 5235).